The chain runs to 159 residues: 6,7-dimethyl-8-ribityllumazine synthase (159 aa).

Residues phenylalanine 23, 58-60 (AYE), and 82-84 (TII) contribute to the 5-amino-6-(D-ribitylamino)uracil site. Residue histidine 90 is the Proton donor of the active site. Residue leucine 115 coordinates 5-amino-6-(D-ribitylamino)uracil. Arginine 129 lines the (2S)-2-hydroxy-3-oxobutyl phosphate pocket.

This sequence belongs to the DMRL synthase family. As to quaternary structure, forms an icosahedral capsid composed of 60 subunits, arranged as a dodecamer of pentamers.

It catalyses the reaction (2S)-2-hydroxy-3-oxobutyl phosphate + 5-amino-6-(D-ribitylamino)uracil = 6,7-dimethyl-8-(1-D-ribityl)lumazine + phosphate + 2 H2O + H(+). It participates in cofactor biosynthesis; riboflavin biosynthesis; riboflavin from 2-hydroxy-3-oxobutyl phosphate and 5-amino-6-(D-ribitylamino)uracil: step 1/2. Catalyzes the formation of 6,7-dimethyl-8-ribityllumazine by condensation of 5-amino-6-(D-ribitylamino)uracil with 3,4-dihydroxy-2-butanone 4-phosphate. This is the penultimate step in the biosynthesis of riboflavin. The polypeptide is 6,7-dimethyl-8-ribityllumazine synthase (Blochmanniella floridana).